The following is a 578-amino-acid chain: Membrane protein insertase YidC (578 aa).

Residues 3 to 23 (IQRSILIVALAVVSYLLVLQW) traverse the membrane as a helical segment. The disordered stretch occupies residues 34–72 (AASASMNTTQGLPDTPSASGTSSDVPTAQSSAAGSEAAD). Residues 37–66 (ASMNTTQGLPDTPSASGTSSDVPTAQSSAA) show a composition bias toward polar residues. 5 consecutive transmembrane segments (helical) span residues 361 to 381 (LELTVDYGFLWFIAQPIFWLL), 387 to 407 (LIGNWGWSIIALTVLIKLAFF), 457 to 477 (LGGCLPILVQMPVFLSLYWVL), 500 to 520 (PFFILPIVMGGTMLIQQMLNP), and 535 to 555 (PIIFTFFFLWFPAGLVLYWVV).

It belongs to the OXA1/ALB3/YidC family. Type 1 subfamily. As to quaternary structure, interacts with the Sec translocase complex via SecD. Specifically interacts with transmembrane segments of nascent integral membrane proteins during membrane integration.

The protein resides in the cell inner membrane. Its function is as follows. Required for the insertion and/or proper folding and/or complex formation of integral membrane proteins into the membrane. Involved in integration of membrane proteins that insert both dependently and independently of the Sec translocase complex, as well as at least some lipoproteins. Aids folding of multispanning membrane proteins. The sequence is that of Membrane protein insertase YidC from Pseudomonas aeruginosa (strain LESB58).